Here is a 79-residue protein sequence, read N- to C-terminus: Exodeoxyribonuclease 7 small subunit (79 aa).

This sequence belongs to the XseB family. Heterooligomer composed of large and small subunits.

It is found in the cytoplasm. The catalysed reaction is Exonucleolytic cleavage in either 5'- to 3'- or 3'- to 5'-direction to yield nucleoside 5'-phosphates.. In terms of biological role, bidirectionally degrades single-stranded DNA into large acid-insoluble oligonucleotides, which are then degraded further into small acid-soluble oligonucleotides. In Lactococcus lactis subsp. cremoris (strain MG1363), this protein is Exodeoxyribonuclease 7 small subunit.